A 522-amino-acid chain; its full sequence is Peptide chain release factor 3 (522 aa).

The tr-type G domain occupies 10 to 277 (ASRKTFAIIS…TFVDFAPSPS (268 aa)). Residues 19–26 (SHPDAGKT), 87–91 (DTPGH), and 141–144 (NKMD) each bind GTP.

It belongs to the TRAFAC class translation factor GTPase superfamily. Classic translation factor GTPase family. PrfC subfamily.

The protein localises to the cytoplasm. Increases the formation of ribosomal termination complexes and stimulates activities of RF-1 and RF-2. It binds guanine nucleotides and has strong preference for UGA stop codons. It may interact directly with the ribosome. The stimulation of RF-1 and RF-2 is significantly reduced by GTP and GDP, but not by GMP. The polypeptide is Peptide chain release factor 3 (Listeria monocytogenes serotype 4b (strain F2365)).